A 98-amino-acid polypeptide reads, in one-letter code: C-X-C motif chemokine 10 (98 aa).

An N-terminal signal peptide occupies residues 1–21 (MNQTAILICCLIFLTLSGIQG). A Citrulline; by PAD2 modification is found at R26. Intrachain disulfides connect C30/C57 and C32/C74.

It belongs to the intercrine alpha (chemokine CxC) family. As to quaternary structure, monomer, dimer, and tetramer. Interacts with CXCR3 (via N-terminus). Post-translationally, several proteases can mediate post-secretion cleavages. DPP4 cleaves CXCL10 on its N-terminal 2 amino acids leading to an antagonist form of CXCL10. This dominant negative form is capable of binding CXCR3 but does not induce signaling. MMP9 cleaves 9 amino acids instead. As to expression, mainly secreted by monocytes, endothelial cells as well as fibroblasts. Expressed by epithelial cells in thymus. Microglial cells produce CXCL10 in response to viral stimulation.

The protein resides in the secreted. Pro-inflammatory cytokine that is involved in a wide variety of processes such as chemotaxis, differentiation, and activation of peripheral immune cells, regulation of cell growth, apoptosis and modulation of angiostatic effects. Plays thereby an important role during viral infections by stimulating the activation and migration of immune cells to the infected sites. Mechanistically, binding of CXCL10 to the CXCR3 receptor activates G protein-mediated signaling and results in downstream activation of phospholipase C-dependent pathway, an increase in intracellular calcium production and actin reorganization. In turn, recruitment of activated Th1 lymphocytes occurs at sites of inflammation. Activation of the CXCL10/CXCR3 axis also plays an important role in neurons in response to brain injury for activating microglia, the resident macrophage population of the central nervous system, and directing them to the lesion site. This recruitment is an essential element for neuronal reorganization. The protein is C-X-C motif chemokine 10 (CXCL10) of Homo sapiens (Human).